We begin with the raw amino-acid sequence, 484 residues long: Glycogen synthase 2 (484 aa).

Arginine 15 contributes to the ADP-alpha-D-glucose binding site.

The protein belongs to the glycosyltransferase 1 family. Bacterial/plant glycogen synthase subfamily.

The enzyme catalyses [(1-&gt;4)-alpha-D-glucosyl](n) + ADP-alpha-D-glucose = [(1-&gt;4)-alpha-D-glucosyl](n+1) + ADP + H(+). It participates in glycan biosynthesis; glycogen biosynthesis. Its function is as follows. Synthesizes alpha-1,4-glucan chains using ADP-glucose. The sequence is that of Glycogen synthase 2 from Geobacter sulfurreducens (strain ATCC 51573 / DSM 12127 / PCA).